Here is a 410-residue protein sequence, read N- to C-terminus: Dual-specificity RNA methyltransferase RlmN (410 aa).

The Proton acceptor role is filled by E123. Residues 129–378 (EEGRGTLCIS…IRTPRGRDIL (250 aa)) form the Radical SAM core domain. An intrachain disulfide couples C136 to C381. [4Fe-4S] cluster-binding residues include C143, C147, and C150. S-adenosyl-L-methionine contacts are provided by residues 207–208 (GE), S239, 261–263 (SLH), and N338. Residue C381 is the S-methylcysteine intermediate of the active site.

Belongs to the radical SAM superfamily. RlmN family. Requires [4Fe-4S] cluster as cofactor.

It localises to the cytoplasm. The enzyme catalyses adenosine(2503) in 23S rRNA + 2 reduced [2Fe-2S]-[ferredoxin] + 2 S-adenosyl-L-methionine = 2-methyladenosine(2503) in 23S rRNA + 5'-deoxyadenosine + L-methionine + 2 oxidized [2Fe-2S]-[ferredoxin] + S-adenosyl-L-homocysteine. It carries out the reaction adenosine(37) in tRNA + 2 reduced [2Fe-2S]-[ferredoxin] + 2 S-adenosyl-L-methionine = 2-methyladenosine(37) in tRNA + 5'-deoxyadenosine + L-methionine + 2 oxidized [2Fe-2S]-[ferredoxin] + S-adenosyl-L-homocysteine. Functionally, specifically methylates position 2 of adenine 2503 in 23S rRNA and position 2 of adenine 37 in tRNAs. m2A2503 modification seems to play a crucial role in the proofreading step occurring at the peptidyl transferase center and thus would serve to optimize ribosomal fidelity. This chain is Dual-specificity RNA methyltransferase RlmN, found in Mesorhizobium japonicum (strain LMG 29417 / CECT 9101 / MAFF 303099) (Mesorhizobium loti (strain MAFF 303099)).